Consider the following 146-residue polypeptide: Ribonuclease H (146 aa).

Residues 1-143 enclose the RNase H type-1 domain; the sequence is MQKKITIYTD…CDELARQAIQ (143 aa). Mg(2+)-binding residues include Asp10, Glu48, Asp70, and Asp135.

The protein belongs to the RNase H family. In terms of assembly, monomer. Mg(2+) serves as cofactor.

The protein localises to the cytoplasm. It carries out the reaction Endonucleolytic cleavage to 5'-phosphomonoester.. Its function is as follows. Endonuclease that specifically degrades the RNA of RNA-DNA hybrids. This is Ribonuclease H from Chlorobium luteolum (strain DSM 273 / BCRC 81028 / 2530) (Pelodictyon luteolum).